A 430-amino-acid polypeptide reads, in one-letter code: Maintenance of mitochondrial morphology protein 1 (430 aa).

Topologically, residues 1-70 are lumenal; it reads MSQGLIETTT…NGNTWSFTQG (70 aa). The chain crosses the membrane as a helical span at residues 71–91; that stretch reads LVIGQISVIFIIIVFVKFFVF. At 92-430 the chain is on the cytoplasmic side; that stretch reads ADSSSHIPTK…TPGEFVNSNI (339 aa). The 229-residue stretch at 159–387 folds into the SMP-LTD domain; sequence ASESLDWFNV…EPRFQVVRLP (229 aa). The tract at residues 305-326 is disordered; it reads GYSKENGSADSASDNDEDEDDG. A compositionally biased stretch (acidic residues) spans 317–326; sequence SDNDEDEDDG.

Belongs to the MMM1 family. Homodimer. Component of the ER-mitochondria encounter structure (ERMES) or MDM complex, composed of MMM1, MDM10, MDM12 and MDM34. An MMM1 homodimer associates with one molecule of MDM12 on each side in a pairwise head-to-tail manner, and the SMP-LTD domains of MMM1 and MDM12 generate a continuous hydrophobic tunnel for phospholipid trafficking.

Its subcellular location is the endoplasmic reticulum membrane. Functionally, component of the ERMES/MDM complex, which serves as a molecular tether to connect the endoplasmic reticulum (ER) and mitochondria. Components of this complex are involved in the control of mitochondrial shape and protein biogenesis, and function in nonvesicular lipid trafficking between the ER and mitochondria. The MDM12-MMM1 subcomplex functions in the major beta-barrel assembly pathway that is responsible for biogenesis of all outer membrane beta-barrel proteins, and acts in a late step after the SAM complex. The MDM10-MDM12-MMM1 subcomplex further acts in the TOM40-specific pathway after the action of the MDM12-MMM1 complex. Essential for establishing and maintaining the structure of mitochondria and maintenance of mtDNA nucleoids. This Candida dubliniensis (strain CD36 / ATCC MYA-646 / CBS 7987 / NCPF 3949 / NRRL Y-17841) (Yeast) protein is Maintenance of mitochondrial morphology protein 1.